A 163-amino-acid chain; its full sequence is UPF0262 protein RPC_4416 (163 aa).

The protein belongs to the UPF0262 family.

The chain is UPF0262 protein RPC_4416 from Rhodopseudomonas palustris (strain BisB18).